The primary structure comprises 448 residues: Protein kinase C and casein kinase substrate in neurons protein 2 (448 aa).

Positions 11-282 (VEVSSDSFWE…NIKTADAVED (272 aa)) constitute an F-BAR domain. Positions 25–274 (KRTVKRIDDG…NIYRELEQNI (250 aa)) form a coiled coil. The disordered stretch occupies residues 315-386 (SRREKKKASD…DTNPFDEDTS (72 aa)). A compositionally biased stretch (polar residues) spans 329–358 (TGINQTGDQVSQPNKHSSVSSYEKNQSYPT). The NPF1 motif lies at 367–369 (NPF). The short motif at 379–381 (NPF) is the NPF2 element. One can recognise an SH3 domain in the interval 388–448 (VMEVRVRALY…YPANYVEPIQ (61 aa)).

This sequence belongs to the PACSIN family. Post-translationally, phosphorylated on serine residues. As to expression, detected in intestine, cardiac muscle, lung and brain (at protein level). Expressed in all tissues tested, including, gizzard, liver, cardiac muscle, skeletal muscle and skin.

Its subcellular location is the cytoplasm. It localises to the cytoskeleton. The protein resides in the cytoplasmic vesicle membrane. The protein localises to the cell projection. It is found in the ruffle membrane. Its subcellular location is the early endosome. It localises to the recycling endosome membrane. The protein resides in the cell membrane. The protein localises to the membrane. It is found in the caveola. Its subcellular location is the cell junction. It localises to the focal adhesion. Functionally, regulates the morphogenesis and endocytosis of caveolae. Lipid-binding protein that is able to promote the tubulation of the phosphatidic acid-containing membranes it preferentially binds. Plays a role in intracellular vesicle-mediated transport. Involved in the endocytosis of cell-surface receptors like the EGF receptor, contributing to its internalization in the absence of EGF stimulus. Essential for endothelial organization in sprouting angiogenesis, modulates CDH5-based junctions. Facilitates endothelial front-rear polarity during migration by recruiting EHD4 and MICALL1 to asymmetric adherens junctions between leader and follower cells. The protein is Protein kinase C and casein kinase substrate in neurons protein 2 (PACSIN2) of Gallus gallus (Chicken).